A 180-amino-acid polypeptide reads, in one-letter code: MDFRPDQVVARIRGAVEGALTAQSVLGIGGALVLILVVIALLPDRFTRGEGKTATAVSSGAAQALPAALPGLSPFTPAKPLQFSGRVTQVASIGNDVGWGQVHVWIDNGTGALQEISVAPQSYLNQIGCPSFDGARISGIGFLFDAGRPNAELYAKSVLVGGRTCKLRDDEGLALWMTVQ.

Topologically, residues 1–21 (MDFRPDQVVARIRGAVEGALT) are cytoplasmic. A helical membrane pass occupies residues 22-42 (AQSVLGIGGALVLILVVIALL). Over 43–180 (PDRFTRGEGK…EGLALWMTVQ (138 aa)) the chain is Lumenal.

This sequence belongs to the magnetosome MamS family.

It localises to the magnetosome membrane. In terms of biological role, may play a role in magnetite crystal growth and size. This Magnetospirillum gryphiswaldense (strain DSM 6361 / JCM 21280 / NBRC 15271 / MSR-1) protein is Magnetosome protein MamS.